The following is a 48-amino-acid chain: ATP synthase protein 8 (48 aa).

An N-formylmethionine modification is found at Met-1. At 1–12 (MPQLIPFFFLNQ) the chain is on the mitochondrial intermembrane side. Residues 13–33 (LFYGYLALFALLVLVSWVILP) traverse the membrane as a helical segment. The Mitochondrial matrix portion of the chain corresponds to 34–48 (YLLQLQIVRLLITKL).

F-type ATP synthases have 2 components, the catalytic core F(1) and the membrane-embedded component F(0), linked together by a central stalk and a peripheral stalk. The central stalk, also called rotor shaft, is often seen as part of F(1). The peripheral stalk is seen as part of F(0). F(0) contains the membrane channel next to the rotor. F-type ATP synthases form dimers but each monomer functions independently in ATP generation. The dimer consists of 18 different polypeptides: ATP1 (subunit alpha, part of F(1), 3 molecules per monomer), ATP2 (subunit beta, part of F(1), 3 molecules per monomer), ATP3 (subunit gamma, part of the central stalk), ATP4 (subunit b, part of the peripheral stalk), ATP5/OSCP (subunit 5/OSCP, part of the peripheral stalk), ATP6 (subunit a, part of the peripheral stalk), ATP7 (subunit d, part of the peripheral stalk), ATP8 (subunit 8, part of the peripheral stalk), OLI1 (subunit c, part of the rotor, 10 molecules per monomer), ATP14 (subunit h, part of the peripheral stalk), ATP15 (subunit epsilon, part of the central stalk), ATP16 (subunit delta, part of the central stalk), ATP17 (subunit f, part of the peripheral stalk), ATP18 (subunit i/j, part of the peripheral stalk). Dimer-specific subunits are ATP19 (subunit k, at interface between monomers), ATP20 (subunit g, at interface between monomers), TIM11 (subunit e, at interface between monomers). Also contains subunit L.

It localises to the mitochondrion inner membrane. Functionally, mitochondrial membrane ATP synthase (F(1)F(0) ATP synthase or Complex V) produces ATP from ADP in the presence of a proton gradient across the membrane which is generated by electron transport complexes of the respiratory chain. F-type ATP synthases consist of two structural domains, F(1) - containing the extramembraneous catalytic core, and F(0) - containing the membrane proton channel, linked together by a central stalk and a peripheral stalk. During catalysis, ATP synthesis in the catalytic domain of F(1) is coupled via a rotary mechanism of the central stalk subunits to proton translocation. Part of the complex F(0) domain. Minor subunit located with subunit a/ATP6 in the membrane. The sequence is that of ATP synthase protein 8 from Pichia angusta (Yeast).